The sequence spans 343 residues: MVSIMPKILYNPEVLGHKPKSYHVENPERVLTILNSLKSNGFDDIVLIEGKSTINEILEIHSRDYVYSIINLSKSFNYYDGDTYLCDRTLDAALTAFKLAKEAVKLALKDRDLYFALTRPPGHHAGISGRALGAMSNGFCIFNNIAGAARLAKNYMKKVIIIDFDVHHGNGTQEIFWNDNRVIHIDFHQRGIYPGTGDILDIGGEEAKGTKINLPFPAHSTDADYIFAWNEIVEPILNYFSPDTVLVSAGFDAFINDGLASMDLTETFYRFVGAKLSGYSVTAVLEGGYSIGLKYAPPAFLDGYVDAKDVLDNLEDYTVINSNEVKSMVKNVKKIIGEYLDIF.

It belongs to the histone deacetylase family.

Functionally, putative deacetylase. This is an uncharacterized protein from Methanocaldococcus jannaschii (strain ATCC 43067 / DSM 2661 / JAL-1 / JCM 10045 / NBRC 100440) (Methanococcus jannaschii).